The primary structure comprises 377 residues: ATP phosphoribosyltransferase regulatory subunit (377 aa).

This sequence belongs to the class-II aminoacyl-tRNA synthetase family. HisZ subfamily. In terms of assembly, heteromultimer composed of HisG and HisZ subunits.

Its subcellular location is the cytoplasm. It functions in the pathway amino-acid biosynthesis; L-histidine biosynthesis; L-histidine from 5-phospho-alpha-D-ribose 1-diphosphate: step 1/9. In terms of biological role, required for the first step of histidine biosynthesis. May allow the feedback regulation of ATP phosphoribosyltransferase activity by histidine. The sequence is that of ATP phosphoribosyltransferase regulatory subunit from Sinorhizobium medicae (strain WSM419) (Ensifer medicae).